The primary structure comprises 290 residues: uncharacterized protein (290 aa).

It belongs to the glycosyltransferase 2 family.

This is an uncharacterized protein from Methanocaldococcus jannaschii (strain ATCC 43067 / DSM 2661 / JAL-1 / JCM 10045 / NBRC 100440) (Methanococcus jannaschii).